A 120-amino-acid chain; its full sequence is Dihydroneopterin triphosphate 2'-epimerase (120 aa).

Belongs to the DHNA family. In terms of assembly, homooctamer.

The enzyme catalyses 7,8-dihydroneopterin 3'-triphosphate = 7,8-dihydromonapterin 3'-triphosphate. In terms of biological role, catalyzes the epimerization of carbon 2' of the side chain of 7,8-dihydroneopterin triphosphate (H2NTP) to form 7,8-dihydromonapterin triphosphate (H2MTP). Is required for tetrahydromonapterin biosynthesis. In Escherichia coli O157:H7, this protein is Dihydroneopterin triphosphate 2'-epimerase (folX).